Here is a 132-residue protein sequence, read N- to C-terminus: Transcriptional regulator MraZ (132 aa).

SpoVT-AbrB domains follow at residues 5–47 and 76–119; these read TYEH…SKDD and TVEI…SKNK.

It belongs to the MraZ family. As to quaternary structure, forms oligomers.

The protein resides in the cytoplasm. It is found in the nucleoid. This Mycoplasma capricolum subsp. capricolum (strain California kid / ATCC 27343 / NCTC 10154) protein is Transcriptional regulator MraZ.